The following is a 428-amino-acid chain: GTPase Obg (428 aa).

The region spanning 1-158 (MFVDQVKIYV…RDVILELKVL (158 aa)) is the Obg domain. The tract at residues 117–145 (ARGGRGGRGNSRFATPTNPAPEIAENGEP) is disordered. An OBG-type G domain is found at 159 to 329 (ADVGLVGFPS…LLFEVANLLE (171 aa)). GTP-binding positions include 165-172 (GFPSVGKS), 190-194 (FTTIV), 212-215 (DLPG), 282-285 (NKMD), and 310-312 (SAV). 2 residues coordinate Mg(2+): S172 and T192. Residues 350–428 (KLETEGVKFD…ILEYEFEFID (79 aa)) enclose the OCT domain.

This sequence belongs to the TRAFAC class OBG-HflX-like GTPase superfamily. OBG GTPase family. As to quaternary structure, monomer. Mg(2+) is required as a cofactor.

It localises to the cytoplasm. An essential GTPase which binds GTP, GDP and possibly (p)ppGpp with moderate affinity, with high nucleotide exchange rates and a fairly low GTP hydrolysis rate. Plays a role in control of the cell cycle, stress response, ribosome biogenesis and in those bacteria that undergo differentiation, in morphogenesis control. The chain is GTPase Obg from Bacillus cereus (strain ATCC 10987 / NRS 248).